A 288-amino-acid chain; its full sequence is tRNA (guanine-N(1)-)-methyltransferase (288 aa).

The segment at 82–105 is disordered; the sequence is ATDAVDTSDPGDSAAPDSSAPSGA. A compositionally biased stretch (low complexity) spans 89 to 105; sequence SDPGDSAAPDSSAPSGA. S-adenosyl-L-methionine is bound by residues glycine 137 and 162 to 167; that span reads IGDYVL.

Belongs to the RNA methyltransferase TrmD family. In terms of assembly, homodimer.

The protein resides in the cytoplasm. The catalysed reaction is guanosine(37) in tRNA + S-adenosyl-L-methionine = N(1)-methylguanosine(37) in tRNA + S-adenosyl-L-homocysteine + H(+). Its function is as follows. Specifically methylates guanosine-37 in various tRNAs. The sequence is that of tRNA (guanine-N(1)-)-methyltransferase from Bifidobacterium longum (strain DJO10A).